The chain runs to 322 residues: uncharacterized protein (322 aa).

4 consecutive transmembrane segments (helical) span residues Leu-24–Thr-44, Leu-68–Ile-88, Ile-100–Phe-120, and Val-125–Leu-145.

It is found in the cell membrane. This is an uncharacterized protein from Bacillus subtilis (strain 168).